Consider the following 263-residue polypeptide: Type-2Bb cytolytic delta-endotoxin (263 aa).

This sequence belongs to the cyt1/cyt2 endotoxin family. Post-translationally, active after proteolytic processing.

Functionally, kills the larvae of dipteran insects by making pores in the epithelial cell membrane of the insect midgut. In Bacillus thuringiensis subsp. jegathesan, this protein is Type-2Bb cytolytic delta-endotoxin (cyt2Bb1).